The primary structure comprises 570 residues: Periplasmic trehalase (570 aa).

The first 34 residues, Met-1–Ala-34, serve as a signal peptide directing secretion. Substrate contacts are provided by residues Arg-159, Trp-166–Asp-167, Asn-203, His-212–Gln-214, Arg-284–Glu-286, and Gly-317. Residues Asp-319 and Glu-503 each act as proton donor/acceptor in the active site. Substrate is bound at residue Glu-518. The interval Lys-544–Gln-570 is disordered. A compositionally biased stretch (low complexity) spans Pro-554–Gln-570.

It belongs to the glycosyl hydrolase 37 family. In terms of assembly, monomer.

The protein resides in the periplasm. It carries out the reaction alpha,alpha-trehalose + H2O = alpha-D-glucose + beta-D-glucose. In terms of biological role, provides the cells with the ability to utilize trehalose at high osmolarity by splitting it into glucose molecules that can subsequently be taken up by the phosphotransferase-mediated uptake system. The protein is Periplasmic trehalase of Salmonella paratyphi C (strain RKS4594).